A 98-amino-acid chain; its full sequence is NADH-ubiquinone oxidoreductase chain 4L (98 aa).

The next 3 helical transmembrane spans lie at 1–21 (MSLV…GLLM), 29–49 (SLLC…LMIL), and 61–81 (IILL…LVMV).

This sequence belongs to the complex I subunit 4L family. Core subunit of respiratory chain NADH dehydrogenase (Complex I) which is composed of 45 different subunits.

Its subcellular location is the mitochondrion inner membrane. It carries out the reaction a ubiquinone + NADH + 5 H(+)(in) = a ubiquinol + NAD(+) + 4 H(+)(out). In terms of biological role, core subunit of the mitochondrial membrane respiratory chain NADH dehydrogenase (Complex I) which catalyzes electron transfer from NADH through the respiratory chain, using ubiquinone as an electron acceptor. Part of the enzyme membrane arm which is embedded in the lipid bilayer and involved in proton translocation. The chain is NADH-ubiquinone oxidoreductase chain 4L (MT-ND4L) from Capra hircus (Goat).